The sequence spans 195 residues: Thymidylate kinase (195 aa).

Position 7–14 (7–14 (GIDGVGKS)) interacts with ATP.

Belongs to the thymidylate kinase family.

The enzyme catalyses dTMP + ATP = dTDP + ADP. Its function is as follows. Phosphorylation of dTMP to form dTDP in both de novo and salvage pathways of dTTP synthesis. This is Thymidylate kinase from Campylobacter concisus (strain 13826).